A 79-amino-acid chain; its full sequence is Acyl carrier protein (79 aa).

Positions 2 to 77 constitute a Carrier domain; the sequence is SEIGERVKKI…DATKFLEKNA (76 aa). Residue serine 37 is modified to O-(pantetheine 4'-phosphoryl)serine.

Belongs to the acyl carrier protein (ACP) family. In terms of processing, 4'-phosphopantetheine is transferred from CoA to a specific serine of apo-ACP by AcpS. This modification is essential for activity because fatty acids are bound in thioester linkage to the sulfhydryl of the prosthetic group.

It is found in the cytoplasm. Its pathway is lipid metabolism; fatty acid biosynthesis. Carrier of the growing fatty acid chain in fatty acid biosynthesis. This Rhodopseudomonas palustris (strain HaA2) protein is Acyl carrier protein.